The sequence spans 319 residues: Acetyl esterase (319 aa).

The short motif at 91 to 93 (HGG) is the Involved in the stabilization of the negatively charged intermediate by the formation of the oxyanion hole element. Catalysis depends on residues Ser-165, Asp-262, and His-292.

The protein belongs to the 'GDXG' lipolytic enzyme family. Homodimer. Interacts with MalT and MelA.

The protein localises to the cytoplasm. Its function is as follows. Displays esterase activity towards short chain fatty esters (acyl chain length of up to 8 carbons). Able to hydrolyze triacetylglycerol (triacetin) and tributyrylglycerol (tributyrin), but not trioleylglycerol (triolein) or cholesterol oleate. Negatively regulates MalT activity by antagonizing maltotriose binding. Inhibits MelA galactosidase activity. This chain is Acetyl esterase, found in Shigella flexneri serotype 5b (strain 8401).